We begin with the raw amino-acid sequence, 1198 residues long: Regulator of G-protein signaling 3 (1198 aa).

One can recognise a C2 domain in the interval 137 to 256; that stretch reads GAGQLRLSID…TPDKEISGWY (120 aa). The PDZ domain maps to 299-376; sequence KITIPRGKDG…EIILLVWRMV (78 aa). Arginine 448 is subject to Omega-N-methylarginine. Residues 669 to 933 form a disordered region; sequence QQLAASPPDS…GAEGGLSLRV (265 aa). Serine 674 carries the phosphoserine modification. The span at 679–697 shows a compositional bias: basic and acidic residues; sequence KMFETEADEKREMALEEGK. The span at 739–751 shows a compositional bias: polar residues; the sequence is EPLSSKDSATSEG. Residues 753–773 are compositionally biased toward pro residues; that stretch reads PPGPDAPPSKDVPPCQEPPPA. Positions 877–906 are enriched in acidic residues; the sequence is GDEEDAEEAEEVEEGEEGEEDEDEDTSDDN. Basic and acidic residues predominate over residues 907 to 917; sequence YGERSEAKRSS. Phosphoserine is present on residues serine 943, serine 946, serine 978, and serine 1007. Disordered stretches follow at residues 1007 to 1026 and 1032 to 1056; these read SGADTVGDDDEASRKRKSKN and KNKLGIFRRRNESPGAPPAGKADKM. The 126-residue stretch at 1073–1198 folds into the RGS domain; it reads SLEKLLVHKY…INQKKMSPPL (126 aa).

As to quaternary structure, binds EFNB1 and EFNB2. Binds the GNB1-GNG2 heterodimer. In terms of processing, phosphorylated by cyclic GMP-dependent protein kinase. Post-translationally, ISGylated.

The protein localises to the cytoplasm. It localises to the nucleus. It is found in the cell membrane. In terms of biological role, down-regulates signaling from heterotrimeric G-proteins by increasing the GTPase activity of the alpha subunits, thereby driving them into their inactive GDP-bound form. Down-regulates G-protein-mediated release of inositol phosphates and activation of MAP kinases. This chain is Regulator of G-protein signaling 3 (RGS3), found in Homo sapiens (Human).